The sequence spans 424 residues: UDP-N-acetylglucosamine 1-carboxyvinyltransferase (424 aa).

22–23 (KN) lines the phosphoenolpyruvate pocket. Residue Arg93 participates in UDP-N-acetyl-alpha-D-glucosamine binding. The Proton donor role is filled by Cys117. Cys117 is modified (2-(S-cysteinyl)pyruvic acid O-phosphothioketal). UDP-N-acetyl-alpha-D-glucosamine is bound by residues 122 to 126 (RPVDL), 162 to 165 (KVSV), Asp307, and Ile329.

This sequence belongs to the EPSP synthase family. MurA subfamily.

Its subcellular location is the cytoplasm. It catalyses the reaction phosphoenolpyruvate + UDP-N-acetyl-alpha-D-glucosamine = UDP-N-acetyl-3-O-(1-carboxyvinyl)-alpha-D-glucosamine + phosphate. It functions in the pathway cell wall biogenesis; peptidoglycan biosynthesis. In terms of biological role, cell wall formation. Adds enolpyruvyl to UDP-N-acetylglucosamine. The sequence is that of UDP-N-acetylglucosamine 1-carboxyvinyltransferase from Haemophilus influenzae (strain PittEE).